The primary structure comprises 341 residues: S-adenosylmethionine:tRNA ribosyltransferase-isomerase (341 aa).

This sequence belongs to the QueA family. Monomer.

It is found in the cytoplasm. It carries out the reaction 7-aminomethyl-7-carbaguanosine(34) in tRNA + S-adenosyl-L-methionine = epoxyqueuosine(34) in tRNA + adenine + L-methionine + 2 H(+). The protein operates within tRNA modification; tRNA-queuosine biosynthesis. Transfers and isomerizes the ribose moiety from AdoMet to the 7-aminomethyl group of 7-deazaguanine (preQ1-tRNA) to give epoxyqueuosine (oQ-tRNA). This chain is S-adenosylmethionine:tRNA ribosyltransferase-isomerase, found in Clostridioides difficile (strain 630) (Peptoclostridium difficile).